The sequence spans 468 residues: DNA polymerase IV 1 (468 aa).

Residues 6–188 (VLHLDMDAFF…LPVRRLWGIG (183 aa)) enclose the UmuC domain. Positions 10 and 105 each coordinate Mg(2+). The active site involves Glu-106.

This sequence belongs to the DNA polymerase type-Y family. As to quaternary structure, monomer. Mg(2+) is required as a cofactor.

It localises to the cytoplasm. The enzyme catalyses DNA(n) + a 2'-deoxyribonucleoside 5'-triphosphate = DNA(n+1) + diphosphate. Its function is as follows. Poorly processive, error-prone DNA polymerase involved in untargeted mutagenesis. Copies undamaged DNA at stalled replication forks, which arise in vivo from mismatched or misaligned primer ends. These misaligned primers can be extended by PolIV. Exhibits no 3'-5' exonuclease (proofreading) activity. May be involved in translesional synthesis, in conjunction with the beta clamp from PolIII. The polypeptide is DNA polymerase IV 1 (dinB1) (Mycobacterium tuberculosis (strain CDC 1551 / Oshkosh)).